The chain runs to 338 residues: Patr class I histocompatibility antigen, alpha chain G (338 aa).

The signal sequence occupies residues 1-24 (MVVMAPRTLFLLLSGALTLTETWA). Positions 25–114 (GSHSMRYFSA…LRGYYNQSEA (90 aa)) are alpha-1. Residues 25-308 (GSHSMRYFSA…KQSSLPTIPI (284 aa)) are Extracellular-facing. An N-linked (GlcNAc...) asparagine glycan is attached at Asn-110. The interval 115-206 (SSHTLQWMIG…ENGKEMLQRA (92 aa)) is alpha-2. 2 disulfide bridges follow: Cys-125-Cys-188 and Cys-227-Cys-283. Residues 207–298 (DPPKTHVTHH…GLPEPLMLRW (92 aa)) are alpha-3. The Ig-like C1-type domain maps to 209–299 (PKTHVTHHPV…LPEPLMLRWK (91 aa)). A connecting peptide region spans residues 299–308 (KQSSLPTIPI). The helical transmembrane segment at 309 to 332 (MGIVAGLVVLAAVVTGAAVAAVLW) threads the bilayer. Topologically, residues 333-338 (RKKSSD) are cytoplasmic.

The protein belongs to the MHC class I family. Heterodimer of an alpha chain and a beta chain (beta-2-microglobulin). Homodimer; disulfide-linked. Binds to LILRB1 and LILRB2.

It localises to the cell membrane. Functionally, involved in the presentation of foreign antigens to the immune system. This Pan troglodytes (Chimpanzee) protein is Patr class I histocompatibility antigen, alpha chain G (Patr-G).